Here is an 87-residue protein sequence, read N- to C-terminus: Putative regulatory protein CHY_1489 (87 aa).

It belongs to the RemA family.

This chain is Putative regulatory protein CHY_1489, found in Carboxydothermus hydrogenoformans (strain ATCC BAA-161 / DSM 6008 / Z-2901).